Here is a 130-residue protein sequence, read N- to C-terminus: Small ribosomal subunit protein uS11c (130 aa).

Belongs to the universal ribosomal protein uS11 family. Part of the 30S ribosomal subunit.

The protein resides in the plastid. Its subcellular location is the chloroplast. The protein is Small ribosomal subunit protein uS11c of Oedogonium cardiacum (Filamentous green alga).